The following is a 61-amino-acid chain: Protein translocase subunit SecE (61 aa).

The helical transmembrane segment at 39–59 (LGIILIGLIGMLIRIMGILVL) threads the bilayer.

The protein belongs to the SecE/SEC61-gamma family. In terms of assembly, component of the Sec protein translocase complex. Heterotrimer consisting of SecY (alpha), SecG (beta) and SecE (gamma) subunits. The heterotrimers can form oligomers, although 1 heterotrimer is thought to be able to translocate proteins. Interacts with the ribosome. May interact with SecDF, and other proteins may be involved.

Its subcellular location is the cell membrane. In terms of biological role, essential subunit of the Sec protein translocation channel SecYEG. Clamps together the 2 halves of SecY. May contact the channel plug during translocation. The sequence is that of Protein translocase subunit SecE from Pyrococcus abyssi (strain GE5 / Orsay).